Reading from the N-terminus, the 152-residue chain is Transcriptional repressor NrdR (152 aa).

A zinc finger lies at 3–34 (CAFCGNPDTQVIDSRVSEDGSSIRRRRRCPAC). The region spanning 49–139 (PQVVKTAGHR…VYRSFQDISE (91 aa)) is the ATP-cone domain.

Belongs to the NrdR family. It depends on Zn(2+) as a cofactor.

In terms of biological role, negatively regulates transcription of bacterial ribonucleotide reductase nrd genes and operons by binding to NrdR-boxes. The chain is Transcriptional repressor NrdR from Chromobacterium violaceum (strain ATCC 12472 / DSM 30191 / JCM 1249 / CCUG 213 / NBRC 12614 / NCIMB 9131 / NCTC 9757 / MK).